A 524-amino-acid chain; its full sequence is Glucose-6-phosphate isomerase (524 aa).

Glu-346 (proton donor) is an active-site residue. Catalysis depends on residues His-377 and Lys-492.

Belongs to the GPI family.

It is found in the cytoplasm. It carries out the reaction alpha-D-glucose 6-phosphate = beta-D-fructose 6-phosphate. It participates in carbohydrate biosynthesis; gluconeogenesis. The protein operates within carbohydrate degradation; glycolysis; D-glyceraldehyde 3-phosphate and glycerone phosphate from D-glucose: step 2/4. Catalyzes the reversible isomerization of glucose-6-phosphate to fructose-6-phosphate. The protein is Glucose-6-phosphate isomerase of Chlamydia trachomatis serovar A (strain ATCC VR-571B / DSM 19440 / HAR-13).